A 479-amino-acid chain; its full sequence is Sodium-coupled neutral amino acid transporter 5 (479 aa).

The Cytoplasmic portion of the chain corresponds to 1-58 (MAISCAVGMEMQEPKMNGTLSTGAAAGYRQEREGFLPTTHGPAPGRKPVQFLDFEGKT). Residues 59–81 (SFGMSVFNLSNAIMGSGILGLAY) form a helical membrane-spanning segment. Residues 82 to 97 (AMAHTGVIFFLALLLC) are Extracellular-facing. Residues 98–118 (IALLSSYSIHLLLTCASVVGI) form a helical membrane-spanning segment. Residues 119–135 (RAYEQLGQRAFGPAGKV) are Cytoplasmic-facing. Residues 136–156 (VVAIIICLHNVGAMSSYLFII) form a helical membrane-spanning segment. Over 157 to 176 (KSELPLVIGTFLHMDPEGDW) the chain is Extracellular. Residues 177–197 (FLKGNLLIILVSLLIILPLAL) traverse the membrane as a helical segment. The Cytoplasmic portion of the chain corresponds to 198 to 202 (MKHLG). A helical transmembrane segment spans residues 203-223 (YLGYTSSLSLTCMLFFLISVI). Residues 224 to 264 (YKKFQLGCVVSHNDTVVESEPAPLQAFNSSCEAKLFTVDSQ) are Extracellular-facing. Residues Cys-231 and Cys-254 are joined by a disulfide bond. N-linked (GlcNAc...) asparagine glycosylation occurs at Asn-236. A helical membrane pass occupies residues 265-285 (MSYTVPIMAFAFVCHPEVLPI). Topologically, residues 286-302 (YTELCCPTQRRMQAVAN) are cytoplasmic. A helical membrane pass occupies residues 303–323 (MSIGAMFIMYGLTATFGYLTF). The Extracellular portion of the chain corresponds to 324–341 (YSTVKAEMLEMYTQEDLL). A helical transmembrane segment spans residues 342-362 (ILCVRLAVLLAVTLTVPVVLF). The Cytoplasmic segment spans residues 363-383 (PIRRALQQLLFPSKAFSWPRH). Residues 384–404 (VAIALILLILVNILVICVPTI) form a helical membrane-spanning segment. At 405–406 (RD) the chain is on the extracellular side. Residues 407-427 (IFGFIGSTSAPSLIFILPSVF) traverse the membrane as a helical segment. Residues 428 to 446 (YLRIVPADMEPLFSWPKIQ) lie on the Cytoplasmic side of the membrane. Residues 447–467 (ALCFGVLGVLFMAISLGFMFA) form a helical membrane-spanning segment. Topologically, residues 468 to 479 (NWATGQSRMSGH) are extracellular.

This sequence belongs to the amino acid/polyamine transporter 2 family. In terms of tissue distribution, highly expressed in neocortex, hippocampus, striatum and spinal cord by astrocytes (at protein level). Expressed in brain, lung, stomach, kidney, spleen and testis. Expressed in the cerebral cortex between the second and third postnatal week, where expressed exclusively in glial cells from postnatal day 14 to adulthood (at protein level). Expressed in the cerebellum at post natal day 12 (P12). Expressed in liver. Expressed inside the cell body of the astrocytes.

It is found in the cell membrane. It catalyses the reaction L-serine(out) + Na(+)(out) + H(+)(in) = L-serine(in) + Na(+)(in) + H(+)(out). It carries out the reaction L-alanine(out) + Na(+)(out) + H(+)(in) = L-alanine(in) + Na(+)(in) + H(+)(out). The catalysed reaction is glycine(out) + Na(+)(out) + H(+)(in) = glycine(in) + Na(+)(in) + H(+)(out). The enzyme catalyses L-glutamine(out) + Na(+)(out) + H(+)(in) = L-glutamine(in) + Na(+)(in) + H(+)(out). It catalyses the reaction L-asparagine(out) + Na(+)(out) + H(+)(in) = L-asparagine(in) + Na(+)(in) + H(+)(out). It carries out the reaction L-histidine(out) + Na(+)(out) + H(+)(in) = L-histidine(in) + Na(+)(in) + H(+)(out). The catalysed reaction is L-cysteine(out) + Na(+)(out) + H(+)(in) = L-cysteine(in) + Na(+)(in) + H(+)(out). Its activity is regulated as follows. Not inhibited by lithium. Partial allosteric regulation on ions sodium binding. Symporter that cotransports neutral amino acids and sodium ions, coupled to an H(+) antiporter activity. Releases L-glutamine and glycine from astroglial cells and may participate in the glutamate/GABA-glutamine cycle and the NMDA receptors activation. In addition contributes significantly to L-glutamine uptake in retina, namely in ganglion and Mueller cells and, therefore participates in the retinal glutamate-glutamine cycle. The transport activity is pH sensitive, Li(+) tolerant, bidirectional and associated with large uncoupled fluxes of protons. The transport is electroneutral coupled to the cotransport of 1 Na(+) and the antiport of 1 H(+). May have particular importance for modulation of net hepatic glutamine flux. The protein is Sodium-coupled neutral amino acid transporter 5 of Rattus norvegicus (Rat).